A 76-amino-acid chain; its full sequence is Sulfur carrier protein TusA (76 aa).

Cysteine 14 (cysteine persulfide intermediate) is an active-site residue.

It belongs to the sulfur carrier protein TusA family. Interacts with IscS.

The protein resides in the cytoplasm. It participates in tRNA modification. Its function is as follows. Sulfur carrier protein involved in sulfur trafficking in the cell. Part of a sulfur-relay system required for 2-thiolation during synthesis of 2-thiouridine of the modified wobble base 5-methylaminomethyl-2-thiouridine (mnm(5)s(2)U) in tRNA. Interacts with IscS and stimulates its cysteine desulfurase activity. Accepts an activated sulfur from IscS, which is then transferred to TusD, and thus determines the direction of sulfur flow from IscS to 2-thiouridine formation. Also appears to be involved in sulfur transfer for the biosynthesis of molybdopterin. The sequence is that of Sulfur carrier protein TusA from Buchnera aphidicola subsp. Acyrthosiphon pisum (strain 5A).